Consider the following 546-residue polypeptide: Aladin (546 aa).

Cys2 carries the post-translational modification N-acetylcysteine. The residue at position 33 (Ser33) is a Phosphoserine. WD repeat units lie at residues 149 to 188 (WSSCCLRVFAWHPHTNKFAVALLDDSIRVYNANSTIVPSL), 191 to 230 (RLQRNVAALAWKPLSASVLAVACQSCILIWTLDPTSLSTR), 243 to 282 (GHTPVTSLAWAPNGGWLLSASPVDAVILVWDVSTETCVPL), and 285 to 324 (FRGGGVTNLLWSPDGSKVLATTPSAVFRVWEAQMWTCEAW). Phosphoserine occurs at positions 495, 511, 522, 525, and 541. Positions 500–546 (RAQEPPAGGGGSIHEVPLFTETSPTSAPWDPLPGQSSAQPHSPHSHL) are disordered. A compositionally biased stretch (low complexity) spans 534-546 (QSSAQPHSPHSHL). The short motif at 544–546 (SHL) is the Microbody targeting signal element.

In terms of assembly, interacts with NDC1, the interaction is required for nuclear pore localization. Interacts with the inactive form aurora kinase AURKA. Interacts with PGRMC2. As to expression, widely expressed. Particularly abundant in cerebellum, corpus callosum, adrenal gland, pituitary gland, gastrointestinal structures and fetal lung.

It localises to the nucleus. The protein localises to the nuclear pore complex. The protein resides in the cytoplasm. It is found in the cytoskeleton. Its subcellular location is the spindle pole. It localises to the nucleus envelope. Functionally, plays a role in the normal development of the peripheral and central nervous system. Required for the correct localization of aurora kinase AURKA and the microtubule minus end-binding protein NUMA1 as well as a subset of AURKA targets which ensures proper spindle formation and timely chromosome alignment. The polypeptide is Aladin (Aaas) (Mus musculus (Mouse)).